A 408-amino-acid chain; its full sequence is Lysosome-associated membrane glycoprotein 3 (408 aa).

The first 20 residues, 1 to 20 (MPGQTSAVAVLLCLAVILHG), serve as a signal peptide directing secretion. Residues 21–373 (YQIREKEFPE…IVDECLSDYT (353 aa)) are Lumenal-facing. Residues asparagine 55 and asparagine 225 are each glycosylated (N-linked (GlcNAc...) asparagine). The cysteines at positions 230 and 267 are disulfide-linked. Residue asparagine 284 is glycosylated (N-linked (GlcNAc...) asparagine). The cysteines at positions 331 and 368 are disulfide-linked. The helical transmembrane segment at 374 to 394 (VVLPVVGIIVVVLCVVGLGIY) threads the bilayer. Residues 395-408 (KIRQRRQSSAYQRI) are Cytoplasmic-facing.

Belongs to the LAMP family. As to quaternary structure, monomer. Interacts with FURIN.

The protein localises to the cell surface. Its subcellular location is the lysosome membrane. It is found in the cytoplasmic vesicle membrane. The protein resides in the early endosome membrane. Its function is as follows. Lysosomal membrane glycoprotein which plays a role in the unfolded protein response (UPR) that contributes to protein degradation and cell survival during proteasomal dysfunction. Plays a role in the process of fusion of the lysosome with the autophagosome, thereby modulating the autophagic process. Promotes hepatocellular lipogenesis through activation of the PI3K/Akt pathway. May also play a role in dendritic cell function and in adaptive immunity. The chain is Lysosome-associated membrane glycoprotein 3 (Lamp3) from Rattus norvegicus (Rat).